The chain runs to 248 residues: UDP-2,3-diacylglucosamine hydrolase (248 aa).

Positions 7, 9, 40, 78, and 113 each coordinate Mn(2+). Position 78 to 79 (78 to 79 (NR)) interacts with substrate. Positions 121, 159, 163, 166, and 194 each coordinate substrate. Mn(2+) is bound by residues His-194 and His-196.

The protein belongs to the LpxH family. It depends on Mn(2+) as a cofactor.

It is found in the cell inner membrane. The catalysed reaction is UDP-2-N,3-O-bis[(3R)-3-hydroxytetradecanoyl]-alpha-D-glucosamine + H2O = 2-N,3-O-bis[(3R)-3-hydroxytetradecanoyl]-alpha-D-glucosaminyl 1-phosphate + UMP + 2 H(+). The protein operates within glycolipid biosynthesis; lipid IV(A) biosynthesis; lipid IV(A) from (3R)-3-hydroxytetradecanoyl-[acyl-carrier-protein] and UDP-N-acetyl-alpha-D-glucosamine: step 4/6. In terms of biological role, hydrolyzes the pyrophosphate bond of UDP-2,3-diacylglucosamine to yield 2,3-diacylglucosamine 1-phosphate (lipid X) and UMP by catalyzing the attack of water at the alpha-P atom. Involved in the biosynthesis of lipid A, a phosphorylated glycolipid that anchors the lipopolysaccharide to the outer membrane of the cell. The polypeptide is UDP-2,3-diacylglucosamine hydrolase (Pseudomonas syringae pv. tomato (strain ATCC BAA-871 / DC3000)).